A 290-amino-acid chain; its full sequence is Hydroxyacylglutathione hydrolase-like protein (290 aa).

The Zn(2+) site is built by H54, H56, D58, H59, H110, D134, and H172.

It belongs to the metallo-beta-lactamase superfamily. Glyoxalase II family. It depends on Zn(2+) as a cofactor.

Hydrolase acting on ester bonds. In Homo sapiens (Human), this protein is Hydroxyacylglutathione hydrolase-like protein (HAGHL).